The following is a 393-amino-acid chain: MNKPDLIEKQNRLAELKENNVSLKSQISGFEVKNAIEDLPKVQELEKTLSENSIEIIKIENELNAQEEKPKGKDKMTNFIESQNAVTEFFDVLKKNSGKSEIKNAWSAKLAENGVTITDTTFQLPRKLVESINTALLNTNPVFKVFHVTNVGALLVSRSFDSANEAQVHKDGQTKTEQAATLTIDTLEPVMVYKLQSLAERVKRLQMSYSELYNLIVAELTQAIVNKIVDLALVEGDGTNGFKSIDKEADVKKIKKITTKAKSAGKTPFADAIEEAVDFVRPTAGRRYLIVKTEDRKALLDELRQATANANVRIKNDDTEIASEVGVDEIIVYTGSKALKPTVLVDQKYHIDMQDLTKVDAFEWKTNSNMILVETLTSGHVETYNAGAVITVS.

A coiled-coil region spans residues 5–69 (DLIEKQNRLA…ENELNAQEEK (65 aa)).

This sequence belongs to the Skunalikevirus capsid protein family. Homomultimer. In terms of processing, probably cleaved by the viral protease during maturation.

Its subcellular location is the virion. Capsid protein self-assembles to form an icosahedral capsid with a T=7 symmetry, about 69 nm in diameter, and consisting of 60 capsid proteins hexamers and 11 pentamers. The capsid encapsulates the genomic DNA. The polypeptide is Capsid protein (Lactococcus phage p2 (Lactococcus lactis bacteriophage p2)).